Here is a 355-residue protein sequence, read N- to C-terminus: MEELTIDLKDKKYPIYIGYNILRRLIKEYWDKYSSSFLITHPFLREIYKEDLSIPEENVIYVPVGEKSKSFQEVIKISKELAKRMADRRSALFAFGGGVVGDLTGFIASIYMRGIKYIQIPTTLLSQVDSSIGGKTGINIREGKNLIGTFYHPDAVIIDIKTLDTLSEREYKSGIAEVIKYGMIMNYEFFKFLEKNVDSILSKDVDKLLYVIKESLLCKKYVVEKDEKESSLRMILNFGHTFGHAIEAKGGYRRFLHGEAVAIGMLLATYLGYKLGFCNYEVLERLKELLMLFGFKIKSPYRIEDLMEYIKRDKKAYGGKLRLILPREIGRVEIVEDIEEKDIIKILKEGDDYGK.

Residues 98 to 102 (GVVGD), 122 to 123 (TT), Lys135, Lys144, and 162 to 165 (TLDT) contribute to the NAD(+) site. Positions 177, 240, and 257 each coordinate Zn(2+).

It belongs to the sugar phosphate cyclases superfamily. Dehydroquinate synthase family. Co(2+) serves as cofactor. The cofactor is Zn(2+). It depends on NAD(+) as a cofactor.

The protein resides in the cytoplasm. The catalysed reaction is 7-phospho-2-dehydro-3-deoxy-D-arabino-heptonate = 3-dehydroquinate + phosphate. The protein operates within metabolic intermediate biosynthesis; chorismate biosynthesis; chorismate from D-erythrose 4-phosphate and phosphoenolpyruvate: step 2/7. Functionally, catalyzes the conversion of 3-deoxy-D-arabino-heptulosonate 7-phosphate (DAHP) to dehydroquinate (DHQ). The polypeptide is 3-dehydroquinate synthase (Dictyoglomus turgidum (strain DSM 6724 / Z-1310)).